The following is a 456-amino-acid chain: Smoothelin-like protein 2 (456 aa).

A coiled-coil region spans residues 24 to 88 (LEGAVRALHE…RQVEALGLAT (65 aa)). The residue at position 96 (threonine 96) is a Phosphothreonine. Phosphoserine is present on residues serine 98, serine 126, and serine 131. Residues 120–129 (HATFSLSGRS) show a composition bias toward polar residues. Disordered stretches follow at residues 120–140 (HATF…ASDL), 154–190 (GHQL…RMPH), and 220–310 (VGGF…GAQA). The span at 131–140 (SVEHDEASDL) shows a compositional bias: basic and acidic residues. Over residues 163 to 174 (NGSSEVQTSSAQ) the composition is skewed to polar residues. Over residues 242–251 (SSSFTRSLSG) the composition is skewed to low complexity. 3 positions are modified to phosphoserine: serine 250, serine 252, and serine 265. A compositionally biased stretch (pro residues) spans 268 to 279 (LVTPPQSPPSSQ). Position 270 is a phosphothreonine (threonine 270). Serine 274 carries the phosphoserine modification. Positions 298–308 (RSQTLPRTSGA) are enriched in polar residues. Serine 339 is subject to Phosphoserine. A Calponin-homology (CH) domain is found at 346-453 (SSIKQILLEW…YVQSLYNHLR (108 aa)).

Belongs to the smoothelin family.

In Mus musculus (Mouse), this protein is Smoothelin-like protein 2 (Smtnl2).